We begin with the raw amino-acid sequence, 311 residues long: Ribosomal RNA small subunit methyltransferase H (311 aa).

S-adenosyl-L-methionine contacts are provided by residues 32-34, D52, F78, D99, and Q106; that span reads GGH.

It belongs to the methyltransferase superfamily. RsmH family.

It is found in the cytoplasm. It carries out the reaction cytidine(1402) in 16S rRNA + S-adenosyl-L-methionine = N(4)-methylcytidine(1402) in 16S rRNA + S-adenosyl-L-homocysteine + H(+). In terms of biological role, specifically methylates the N4 position of cytidine in position 1402 (C1402) of 16S rRNA. In Halothermothrix orenii (strain H 168 / OCM 544 / DSM 9562), this protein is Ribosomal RNA small subunit methyltransferase H.